The chain runs to 255 residues: Thiazole synthase (255 aa).

K96 acts as the Schiff-base intermediate with DXP in catalysis. Residues G157, A183–G184, and N205–T206 each bind 1-deoxy-D-xylulose 5-phosphate.

It belongs to the ThiG family. Homotetramer. Forms heterodimers with either ThiH or ThiS.

The protein localises to the cytoplasm. It carries out the reaction [ThiS sulfur-carrier protein]-C-terminal-Gly-aminoethanethioate + 2-iminoacetate + 1-deoxy-D-xylulose 5-phosphate = [ThiS sulfur-carrier protein]-C-terminal Gly-Gly + 2-[(2R,5Z)-2-carboxy-4-methylthiazol-5(2H)-ylidene]ethyl phosphate + 2 H2O + H(+). It functions in the pathway cofactor biosynthesis; thiamine diphosphate biosynthesis. Catalyzes the rearrangement of 1-deoxy-D-xylulose 5-phosphate (DXP) to produce the thiazole phosphate moiety of thiamine. Sulfur is provided by the thiocarboxylate moiety of the carrier protein ThiS. In vitro, sulfur can be provided by H(2)S. The protein is Thiazole synthase of Staphylococcus saprophyticus subsp. saprophyticus (strain ATCC 15305 / DSM 20229 / NCIMB 8711 / NCTC 7292 / S-41).